Reading from the N-terminus, the 288-residue chain is Bifunctional protein FolD (288 aa).

NADP(+)-binding positions include 165-167 (GRS) and serine 190.

Belongs to the tetrahydrofolate dehydrogenase/cyclohydrolase family. As to quaternary structure, homodimer.

The catalysed reaction is (6R)-5,10-methylene-5,6,7,8-tetrahydrofolate + NADP(+) = (6R)-5,10-methenyltetrahydrofolate + NADPH. It carries out the reaction (6R)-5,10-methenyltetrahydrofolate + H2O = (6R)-10-formyltetrahydrofolate + H(+). The protein operates within one-carbon metabolism; tetrahydrofolate interconversion. Functionally, catalyzes the oxidation of 5,10-methylenetetrahydrofolate to 5,10-methenyltetrahydrofolate and then the hydrolysis of 5,10-methenyltetrahydrofolate to 10-formyltetrahydrofolate. The protein is Bifunctional protein FolD of Bdellovibrio bacteriovorus (strain ATCC 15356 / DSM 50701 / NCIMB 9529 / HD100).